Reading from the N-terminus, the 251-residue chain is Vitamin B12 import ATP-binding protein BtuD (251 aa).

Residues 2–236 form the ABC transporter domain; sequence IRVNSLQVDS…EVLQSVFGTS (235 aa). 30–37 is an ATP binding site; that stretch reads GPNGCGKS.

The protein belongs to the ABC transporter superfamily. Vitamin B12 importer (TC 3.A.1.13.1) family. In terms of assembly, the complex is composed of two ATP-binding proteins (BtuD), two transmembrane proteins (BtuC) and a solute-binding protein (BtuF).

Its subcellular location is the cell inner membrane. The catalysed reaction is an R-cob(III)alamin(out) + ATP + H2O = an R-cob(III)alamin(in) + ADP + phosphate + H(+). In terms of biological role, part of the ABC transporter complex BtuCDF involved in vitamin B12 import. Responsible for energy coupling to the transport system. This is Vitamin B12 import ATP-binding protein BtuD from Vibrio cholerae serotype O1 (strain ATCC 39541 / Classical Ogawa 395 / O395).